A 235-amino-acid polypeptide reads, in one-letter code: ATP phosphoribosyltransferase (235 aa).

The protein belongs to the ATP phosphoribosyltransferase family. Short subfamily. As to quaternary structure, heteromultimer composed of HisG and HisZ subunits.

It is found in the cytoplasm. The catalysed reaction is 1-(5-phospho-beta-D-ribosyl)-ATP + diphosphate = 5-phospho-alpha-D-ribose 1-diphosphate + ATP. It participates in amino-acid biosynthesis; L-histidine biosynthesis; L-histidine from 5-phospho-alpha-D-ribose 1-diphosphate: step 1/9. Its function is as follows. Catalyzes the condensation of ATP and 5-phosphoribose 1-diphosphate to form N'-(5'-phosphoribosyl)-ATP (PR-ATP). Has a crucial role in the pathway because the rate of histidine biosynthesis seems to be controlled primarily by regulation of HisG enzymatic activity. The polypeptide is ATP phosphoribosyltransferase (Synechococcus sp. (strain JA-2-3B'a(2-13)) (Cyanobacteria bacterium Yellowstone B-Prime)).